A 360-amino-acid polypeptide reads, in one-letter code: MLTLSDFDFDLPPELIAQTALPERSASRLLEVDNTNPSAPPRLVDRRFAELPACVAPGDLLVFNDTKVLKARFFGRKASGGKIEVLIERVTGERTALAQIRASKSPPPGTTLTLADAFDVTVGERVEPFFTLHFPDDCLVLIERHGRLPLPPYIEHAPDAADETRYQTVFAANPGAVAAPTAGLHFDDAVLAALEARGVERATLTLHVGAGTFQPVRVENLAEHRMHSESYELTDALVEKIAATRARGGRVIAVGTTSMRALEAAARDAQAAGRPLAATRAETDIFITPGYRFRVVDRLVTNFHLPKSTLLMLVSAFAGIETIRAAYRHAIDARYRFFSYGDAMLLTRRDDAAEATHGGA.

Belongs to the QueA family. As to quaternary structure, monomer.

The protein localises to the cytoplasm. It carries out the reaction 7-aminomethyl-7-carbaguanosine(34) in tRNA + S-adenosyl-L-methionine = epoxyqueuosine(34) in tRNA + adenine + L-methionine + 2 H(+). The protein operates within tRNA modification; tRNA-queuosine biosynthesis. Transfers and isomerizes the ribose moiety from AdoMet to the 7-aminomethyl group of 7-deazaguanine (preQ1-tRNA) to give epoxyqueuosine (oQ-tRNA). The polypeptide is S-adenosylmethionine:tRNA ribosyltransferase-isomerase (Burkholderia pseudomallei (strain 1106a)).